Consider the following 264-residue polypeptide: Fructose-1,6-bisphosphatase/inositol-1-monophosphatase (264 aa).

Mg(2+) is bound by residues glutamate 70, aspartate 86, leucine 88, and aspartate 89. Residues 89–91 (DGT), arginine 185, and alanine 190 each bind substrate. Aspartate 214 is a binding site for Mg(2+).

The protein belongs to the inositol monophosphatase superfamily. FBPase class 4 family. It depends on Mg(2+) as a cofactor.

It carries out the reaction beta-D-fructose 1,6-bisphosphate + H2O = beta-D-fructose 6-phosphate + phosphate. The catalysed reaction is a myo-inositol phosphate + H2O = myo-inositol + phosphate. Phosphatase with broad specificity; it can dephosphorylate fructose 1,6-bisphosphate, and both D and L isomers of inositol-1-phosphate (I-1-P). The chain is Fructose-1,6-bisphosphatase/inositol-1-monophosphatase (suhB) from Aquifex aeolicus (strain VF5).